Consider the following 213-residue polypeptide: Phosphatidylcholine transfer protein (213 aa).

Met1 carries the post-translational modification N-acetylmethionine. Positions 1-212 (MDPGAGAFSE…MVKACQNYKK (212 aa)) constitute an START domain. Tyr72 and Arg78 together coordinate a 1,2-diacyl-sn-glycero-3-phosphocholine. Position 139 is a phosphoserine (Ser139). Gln157 contacts a 1,2-diacyl-sn-glycero-3-phosphocholine. The part of the binding site for phosphatidylcholine stretch occupies residues 171 to 176 (VFMYYF).

Interacts with ACOT13/THEM2.

It is found in the cytoplasm. Catalyzes the transfer of phosphatidylcholine between membranes. Binds phosphatidylcholine in a tight 1:1 stoichiometric complex. This Bos taurus (Bovine) protein is Phosphatidylcholine transfer protein (PCTP).